The following is a 91-amino-acid chain: Acyl carrier protein (91 aa).

A Carrier domain is found at 6–81 (EEIIAELGQI…DIVAYIQKLE (76 aa)). S41 bears the O-(pantetheine 4'-phosphoryl)serine mark.

Belongs to the acyl carrier protein (ACP) family. Post-translationally, 4'-phosphopantetheine is transferred from CoA to a specific serine of apo-ACP by AcpS. This modification is essential for activity because fatty acids are bound in thioester linkage to the sulfhydryl of the prosthetic group.

It is found in the cytoplasm. It participates in lipid metabolism; fatty acid biosynthesis. Carrier of the growing fatty acid chain in fatty acid biosynthesis. The chain is Acyl carrier protein from Rhodococcus erythropolis (strain PR4 / NBRC 100887).